We begin with the raw amino-acid sequence, 385 residues long: Leucine aminopeptidase 1 (385 aa).

The N-terminal stretch at 1–19 is a signal peptide; sequence MKFPSFLSLGIAASTTALA. Positions 20–87 are excised as a propeptide; that stretch reads ALPDQKPIGD…FPRAFAKTAV (68 aa). The N-linked (GlcNAc...) asparagine glycan is linked to N177. The Zn(2+) site is built by H185 and D204. An N-linked (GlcNAc...) asparagine glycan is attached at N229. Residues E243 and D270 each contribute to the Zn(2+) site. The cysteines at positions 319 and 323 are disulfide-linked. Residue H352 participates in Zn(2+) binding.

The protein belongs to the peptidase M28 family. M28E subfamily. As to quaternary structure, monomer. Zn(2+) is required as a cofactor.

The protein localises to the secreted. Extracellular aminopeptidase that allows assimilation of proteinaceous substrates. In Blastomyces gilchristii (strain SLH14081) (Blastomyces dermatitidis), this protein is Leucine aminopeptidase 1 (LAP1).